The primary structure comprises 348 residues: Protein RecA (348 aa).

Position 65-72 (65-72 (GPESSGKT)) interacts with ATP.

It belongs to the RecA family.

The protein resides in the cytoplasm. In terms of biological role, can catalyze the hydrolysis of ATP in the presence of single-stranded DNA, the ATP-dependent uptake of single-stranded DNA by duplex DNA, and the ATP-dependent hybridization of homologous single-stranded DNAs. It interacts with LexA causing its activation and leading to its autocatalytic cleavage. This is Protein RecA from Alteromonas mediterranea (strain DSM 17117 / CIP 110805 / LMG 28347 / Deep ecotype).